A 304-amino-acid polypeptide reads, in one-letter code: Glycine--tRNA ligase alpha subunit (304 aa).

It belongs to the class-II aminoacyl-tRNA synthetase family. Tetramer of two alpha and two beta subunits.

It is found in the cytoplasm. The catalysed reaction is tRNA(Gly) + glycine + ATP = glycyl-tRNA(Gly) + AMP + diphosphate. The protein is Glycine--tRNA ligase alpha subunit of Tolumonas auensis (strain DSM 9187 / NBRC 110442 / TA 4).